The following is a 91-amino-acid chain: DNA-directed RNA polymerase subunit omega (91 aa).

Residues 66 to 91 are disordered; the sequence is QMPPPLPNFPGAANREATGAEDAAGE.

This sequence belongs to the RNA polymerase subunit omega family. As to quaternary structure, the RNAP catalytic core consists of 2 alpha, 1 beta, 1 beta' and 1 omega subunit. When a sigma factor is associated with the core the holoenzyme is formed, which can initiate transcription.

The enzyme catalyses RNA(n) + a ribonucleoside 5'-triphosphate = RNA(n+1) + diphosphate. Functionally, promotes RNA polymerase assembly. Latches the N- and C-terminal regions of the beta' subunit thereby facilitating its interaction with the beta and alpha subunits. The sequence is that of DNA-directed RNA polymerase subunit omega from Acidithiobacillus ferrooxidans (strain ATCC 23270 / DSM 14882 / CIP 104768 / NCIMB 8455) (Ferrobacillus ferrooxidans (strain ATCC 23270)).